The primary structure comprises 88 residues: Small ribosomal subunit protein uS15 (88 aa).

Belongs to the universal ribosomal protein uS15 family. In terms of assembly, part of the 30S ribosomal subunit. Forms a bridge to the 50S subunit in the 70S ribosome, contacting the 23S rRNA.

Functionally, one of the primary rRNA binding proteins, it binds directly to 16S rRNA where it helps nucleate assembly of the platform of the 30S subunit by binding and bridging several RNA helices of the 16S rRNA. Forms an intersubunit bridge (bridge B4) with the 23S rRNA of the 50S subunit in the ribosome. This is Small ribosomal subunit protein uS15 from Borreliella afzelii (strain PKo) (Borrelia afzelii).